A 265-amino-acid polypeptide reads, in one-letter code: MALAYDPLFITSDKSLSAFDVASSPPQPMNLTQDELKRIAAYKAVEFVESGMVLGLGTGSTAKHAVDRIGELLRQGKLENIVGIPTSKKTQEQALSLGIPLSDLDAHPVIDLSIDGADEVDPFLNLVKGRGGSLLREKMIEGASKKFVVIVDDSKMVKHIGGSKLALPVEIVPFCWKFTAEKLRSLLEGYGCEANLRLGEKGKAFVTDNGNYIVDMHVEEDMGDLGAVSDAILRLPGVVEHGMFLDMASTVIIAGELGVKIKNKH.

N-acetylalanine is present on alanine 2. Residue serine 96 is modified to Phosphoserine.

It belongs to the ribose 5-phosphate isomerase family.

It localises to the cytoplasm. The catalysed reaction is aldehydo-D-ribose 5-phosphate = D-ribulose 5-phosphate. It functions in the pathway carbohydrate degradation; pentose phosphate pathway; D-ribose 5-phosphate from D-ribulose 5-phosphate (non-oxidative stage): step 1/1. Functionally, catalyzes the reversible conversion of ribose-5-phosphate to ribulose 5-phosphate. The protein is Probable ribose-5-phosphate isomerase 2 (RPI2) of Arabidopsis thaliana (Mouse-ear cress).